The primary structure comprises 291 residues: Elongation factor Ts (291 aa).

Residues 79–82 form an involved in Mg(2+) ion dislocation from EF-Tu region; the sequence is TDFV.

It belongs to the EF-Ts family.

It localises to the cytoplasm. In terms of biological role, associates with the EF-Tu.GDP complex and induces the exchange of GDP to GTP. It remains bound to the aminoacyl-tRNA.EF-Tu.GTP complex up to the GTP hydrolysis stage on the ribosome. The polypeptide is Elongation factor Ts (Jannaschia sp. (strain CCS1)).